The sequence spans 323 residues: MNSKIQKIELNDGHSIPVLGFGTYATEEHLKKKSMESTKIAIDVGFCHIDCSHLYQNEEEIGQAILSKIEDGTVKREDIFYTSKLWSTSHRPELVRPSLENSLRKLNLDYVDLYLIHFPVSLKPGNELLPKDEHGNLIFDTVDLCDTWEAMEKCKDAGLAKSIGVSNFNRRQLEMILNKPGLKYKPVCNQVECHLYLNQSKLLAYCKMNDIVLVAYGALGTQRYKYCINEDTPVLLDDPVLCAMAKKYKRTPALIALRYQLDRGIVALAKSFNEERIRENMQVFDFQLASDDMKILDGLDRNLRYFPADMFKAHPNFPFFDEY.

NADP(+) is bound by residues 20–24 and aspartate 50; that span reads GFGTY. Tyrosine 55 (proton donor) is an active-site residue. Histidine 117 is a substrate binding site. NADP(+) is bound by residues 166–167, glutamine 190, 216–221, and 270–280; these read SN, YGALGT, and KSFNEERIREN.

Belongs to the aldo/keto reductase family. As to quaternary structure, monomer.

The protein resides in the cytoplasm. The catalysed reaction is (17R,20S)-17,20-dihydroxypregn-4-en-3-one + NADP(+) = 17alpha-hydroxyprogesterone + NADPH + H(+). It catalyses the reaction (17R,20S)-17,20-dihydroxypregn-4-en-3-one + NAD(+) = 17alpha-hydroxyprogesterone + NADH + H(+). Functionally, catalyzes the conversion of progesterone into 20-alpha-dihydroprogesterone (20 alpha-OHP). The sequence is that of Aldo-keto reductase family 1 member C18 (Akr1c18) from Mus musculus (Mouse).